We begin with the raw amino-acid sequence, 374 residues long: Ribosomal RNA large subunit methyltransferase G (374 aa).

Belongs to the methyltransferase superfamily. RlmG family.

The protein localises to the cytoplasm. It catalyses the reaction guanosine(1835) in 23S rRNA + S-adenosyl-L-methionine = N(2)-methylguanosine(1835) in 23S rRNA + S-adenosyl-L-homocysteine + H(+). Specifically methylates the guanine in position 1835 (m2G1835) of 23S rRNA. This is Ribosomal RNA large subunit methyltransferase G from Pseudomonas putida (strain W619).